We begin with the raw amino-acid sequence, 192 residues long: Thymidylate kinase (192 aa).

An ATP-binding site is contributed by 7 to 14; the sequence is GIDCVGKS.

The protein belongs to the thymidylate kinase family.

The catalysed reaction is dTMP + ATP = dTDP + ADP. Phosphorylation of dTMP to form dTDP in both de novo and salvage pathways of dTTP synthesis. This Campylobacter jejuni subsp. doylei (strain ATCC BAA-1458 / RM4099 / 269.97) protein is Thymidylate kinase.